Here is a 373-residue protein sequence, read N- to C-terminus: Cytoplasmic tRNA 2-thiolation protein 1 (373 aa).

It belongs to the TtcA family. CTU1/NCS6/ATPBD3 subfamily.

It is found in the cytoplasm. Its pathway is tRNA modification; 5-methoxycarbonylmethyl-2-thiouridine-tRNA biosynthesis. In terms of biological role, plays a central role in 2-thiolation of mcm(5)S(2)U at tRNA wobble positions of tRNA(Lys), tRNA(Glu) and tRNA(Gln). Directly binds tRNAs and probably acts by catalyzing adenylation of tRNAs, an intermediate required for 2-thiolation. It is unclear whether it acts as a sulfurtransferase that transfers sulfur from thiocarboxylated URM1 onto the uridine of tRNAs at wobble position. Prior mcm(5) tRNA modification by the elongator complex is required for 2-thiolation. May also be involved in protein urmylation. The chain is Cytoplasmic tRNA 2-thiolation protein 1 from Eremothecium gossypii (strain ATCC 10895 / CBS 109.51 / FGSC 9923 / NRRL Y-1056) (Yeast).